Reading from the N-terminus, the 383-residue chain is Succinyl-diaminopimelate desuccinylase (383 aa).

His74 contacts Zn(2+). Asp76 is an active-site residue. Asp107 serves as a coordination point for Zn(2+). The active-site Proton acceptor is Glu141. 3 residues coordinate Zn(2+): Glu142, Glu170, and His356.

This sequence belongs to the peptidase M20A family. DapE subfamily. In terms of assembly, homodimer. The cofactor is Zn(2+). It depends on Co(2+) as a cofactor.

The catalysed reaction is N-succinyl-(2S,6S)-2,6-diaminopimelate + H2O = (2S,6S)-2,6-diaminopimelate + succinate. The protein operates within amino-acid biosynthesis; L-lysine biosynthesis via DAP pathway; LL-2,6-diaminopimelate from (S)-tetrahydrodipicolinate (succinylase route): step 3/3. Its function is as follows. Catalyzes the hydrolysis of N-succinyl-L,L-diaminopimelic acid (SDAP), forming succinate and LL-2,6-diaminopimelate (DAP), an intermediate involved in the bacterial biosynthesis of lysine and meso-diaminopimelic acid, an essential component of bacterial cell walls. The chain is Succinyl-diaminopimelate desuccinylase from Polynucleobacter necessarius subsp. necessarius (strain STIR1).